The sequence spans 329 residues: Cytosolic arginine sensor for mTORC1 subunit 1 (329 aa).

Serine 14 is modified (phosphoserine). ACT domains lie at 72-138 (AEAT…HTLA) and 260-321 (GELW…EVLQ). Residues 111 to 112 (SV), glycine 274, 280 to 281 (IV), and 300 to 304 (TFNFD) each bind L-arginine.

This sequence belongs to the GATS family. Forms homodimers and heterodimers with CASTOR2. Interacts with the GATOR2 complex which is composed of MIOS, SEC13, SEH1L, WDR24 and WDR59; the interaction is negatively regulated by arginine. Interacts with TM4SF5; the interaction is positively regulated by leucine and is negatively regulated by arginine. Post-translationally, phosphorylation at Ser-14 by AKT1, promoting the interaction between CASTOR1 and RNF167. In terms of processing, ubiquitinated by RNF167 via 'Lys-29'-polyubiquitination, leading to its degradation, releasing the GATOR2 complex. Ubiquitination by RNF167 is promoted by phosphorylation at Ser-14 by AKT1.

It localises to the cytoplasm. The protein resides in the cytosol. Functions as an intracellular arginine sensor within the amino acid-sensing branch of the TORC1 signaling pathway. As a homodimer or a heterodimer with CASTOR2, binds and inhibits the GATOR subcomplex GATOR2 and thereby mTORC1. Binding of arginine to CASTOR1 allosterically disrupts the interaction of CASTOR1-containing dimers with GATOR2 which can in turn activate mTORC1 and the TORC1 signaling pathway. The polypeptide is Cytosolic arginine sensor for mTORC1 subunit 1 (Bos taurus (Bovine)).